A 148-amino-acid polypeptide reads, in one-letter code: Lysozyme C-2 (148 aa).

The signal sequence occupies residues 1 to 18; that stretch reads MKTLLTLGLLLLSVTAQA. One can recognise a C-type lysozyme domain in the interval 19–148; the sequence is KVYERCEFAR…LSQYIRNCGV (130 aa). 4 cysteine pairs are disulfide-bonded: Cys24–Cys146, Cys48–Cys134, Cys83–Cys99, and Cys95–Cys113. Catalysis depends on residues Glu53 and Asp71.

Belongs to the glycosyl hydrolase 22 family. As to quaternary structure, monomer. In terms of tissue distribution, expressed weakly in myeloblasts, moderately in immature macrophages, and strongly in both mature macrophages and macrophage-rich tissues.

It localises to the secreted. The enzyme catalyses Hydrolysis of (1-&gt;4)-beta-linkages between N-acetylmuramic acid and N-acetyl-D-glucosamine residues in a peptidoglycan and between N-acetyl-D-glucosamine residues in chitodextrins.. In terms of biological role, lysozymes have primarily a bacteriolytic function; those in tissues and body fluids are associated with the monocyte-macrophage system and enhance the activity of immunoagents. Lyz2 is active against a range of Gram-positive and Gram-negative bacteria. More effective than Lyz1 in killing Gram-negative bacteria. Lyz1 and Lyz2 are equally effective in killing Gram-positive bacteria. The chain is Lysozyme C-2 (Lyz2) from Mus musculus (Mouse).